Here is a 280-residue protein sequence, read N- to C-terminus: 4-diphosphocytidyl-2-C-methyl-D-erythritol kinase (280 aa).

Residue Lys11 is part of the active site. Residue 95 to 105 coordinates ATP; that stretch reads PVAAGLGGGSS. Asp137 is a catalytic residue.

This sequence belongs to the GHMP kinase family. IspE subfamily.

The enzyme catalyses 4-CDP-2-C-methyl-D-erythritol + ATP = 4-CDP-2-C-methyl-D-erythritol 2-phosphate + ADP + H(+). It participates in isoprenoid biosynthesis; isopentenyl diphosphate biosynthesis via DXP pathway; isopentenyl diphosphate from 1-deoxy-D-xylulose 5-phosphate: step 3/6. Functionally, catalyzes the phosphorylation of the position 2 hydroxy group of 4-diphosphocytidyl-2C-methyl-D-erythritol. In Pelobacter propionicus (strain DSM 2379 / NBRC 103807 / OttBd1), this protein is 4-diphosphocytidyl-2-C-methyl-D-erythritol kinase.